We begin with the raw amino-acid sequence, 162 residues long: Ribosome maturation factor RimM (162 aa).

The PRC barrel domain maps to 91 to 162 (DGSFYIDDLI…LIDVVIIEGM (72 aa)).

This sequence belongs to the RimM family. Binds ribosomal protein uS19.

The protein resides in the cytoplasm. In terms of biological role, an accessory protein needed during the final step in the assembly of 30S ribosomal subunit, possibly for assembly of the head region. Essential for efficient processing of 16S rRNA. May be needed both before and after RbfA during the maturation of 16S rRNA. It has affinity for free ribosomal 30S subunits but not for 70S ribosomes. The sequence is that of Ribosome maturation factor RimM from Finegoldia magna (strain ATCC 29328 / DSM 20472 / WAL 2508) (Peptostreptococcus magnus).